The chain runs to 294 residues: NAD kinase (294 aa).

Asp-74 acts as the Proton acceptor in catalysis. Residues 74–75, 148–149, His-159, Arg-176, Asp-178, 189–194, and Gln-249 contribute to the NAD(+) site; these read DG, NE, and TAYSLS.

The protein belongs to the NAD kinase family. Requires a divalent metal cation as cofactor.

The protein resides in the cytoplasm. The enzyme catalyses NAD(+) + ATP = ADP + NADP(+) + H(+). Functionally, involved in the regulation of the intracellular balance of NAD and NADP, and is a key enzyme in the biosynthesis of NADP. Catalyzes specifically the phosphorylation on 2'-hydroxyl of the adenosine moiety of NAD to yield NADP. In Vibrio campbellii (strain ATCC BAA-1116), this protein is NAD kinase.